Consider the following 159-residue polypeptide: MAEVPGAQRPVLAGGPEPRDPLDCWACAVLVTAQNLLVAVFNLLLLALVLGTILLPAVIMLGFGFLCHSQFLRSQAPLCTSHLRDPGFTALLVTGFLLLVPLLVLALATYRRLCLRLRLADCLVPYSRALYRRRRIPQPKQIPVSPGSRSVPTPGKVWV.

2 helical membrane-spanning segments follow: residues 43–63 (LLLLALVLGTILLPAVIMLGF) and 88–108 (FTALLVTGFLLLVPLLVLALA).

The protein belongs to the TMEM88 family. In terms of assembly, interacts (via C-terminus) with DVL1.

It is found in the cell membrane. Functionally, inhibits the Wnt/beta-catenin signaling pathway. Crucial for heart development and acts downstream of GATA factors in the pre-cardiac mesoderm to specify lineage commitment of cardiomyocyte development. This chain is Transmembrane protein 88 (Tmem88), found in Mus musculus (Mouse).